The primary structure comprises 314 residues: Polyamine aminopropyltransferase (314 aa).

One can recognise a PABS domain in the interval 4 to 241; that stretch reads GMYFFEHVTP…LNFGFLLASD (238 aa). An S-methyl-5'-thioadenosine-binding site is contributed by glutamine 33. Spermidine contacts are provided by histidine 64 and glutamate 88. S-methyl-5'-thioadenosine is bound by residues aspartate 108 and 140–141; that span reads DA. Aspartate 158 acts as the Proton acceptor in catalysis. Position 168 (proline 168) interacts with S-methyl-5'-thioadenosine.

The protein belongs to the spermidine/spermine synthase family. Homodimer or homotetramer.

It is found in the cytoplasm. The enzyme catalyses S-adenosyl 3-(methylsulfanyl)propylamine + putrescine = S-methyl-5'-thioadenosine + spermidine + H(+). It functions in the pathway amine and polyamine biosynthesis; spermidine biosynthesis; spermidine from putrescine: step 1/1. Its function is as follows. Catalyzes the irreversible transfer of a propylamine group from the amino donor S-adenosylmethioninamine (decarboxy-AdoMet) to putrescine (1,4-diaminobutane) to yield spermidine. In Thermus thermophilus (strain ATCC BAA-163 / DSM 7039 / HB27), this protein is Polyamine aminopropyltransferase.